The chain runs to 348 residues: tRNA N6-adenosine threonylcarbamoyltransferase (348 aa).

Fe cation-binding residues include H118 and H122. Residues 140 to 144, D173, G186, D190, and N279 contribute to the substrate site; that span reads LVSGG. D309 is a Fe cation binding site.

It belongs to the KAE1 / TsaD family. Requires Fe(2+) as cofactor.

It is found in the cytoplasm. The enzyme catalyses L-threonylcarbamoyladenylate + adenosine(37) in tRNA = N(6)-L-threonylcarbamoyladenosine(37) in tRNA + AMP + H(+). Functionally, required for the formation of a threonylcarbamoyl group on adenosine at position 37 (t(6)A37) in tRNAs that read codons beginning with adenine. Is involved in the transfer of the threonylcarbamoyl moiety of threonylcarbamoyl-AMP (TC-AMP) to the N6 group of A37, together with TsaE and TsaB. TsaD likely plays a direct catalytic role in this reaction. This is tRNA N6-adenosine threonylcarbamoyltransferase from Lactiplantibacillus plantarum (strain ATCC BAA-793 / NCIMB 8826 / WCFS1) (Lactobacillus plantarum).